The sequence spans 248 residues: Small ribosomal subunit protein uS5 (248 aa).

Positions 1–87 are disordered; that stretch reads MEDKKLSSAK…NPRFQRNNKD (87 aa). Residues 8–23 show a composition bias toward low complexity; it reads SAKPATSSKPAPKAPS. Positions 57-87 are enriched in basic and acidic residues; sequence VAFEKRNFTSGDKTKKPTDSKNPRFQRNNKD. One can recognise an S5 DRBM domain in the interval 94–157; the sequence is YEEKIVDIAR…KDAHNNLVEV (64 aa).

This sequence belongs to the universal ribosomal protein uS5 family. Part of the 30S ribosomal subunit. Contacts proteins S4 and S8.

In terms of biological role, with S4 and S12 plays an important role in translational accuracy. Located at the back of the 30S subunit body where it stabilizes the conformation of the head with respect to the body. The chain is Small ribosomal subunit protein uS5 from Mycoplasmopsis synoviae (strain 53) (Mycoplasma synoviae).